An 848-amino-acid polypeptide reads, in one-letter code: DIS3-like exonuclease 2 (848 aa).

The segment at 153-173 (KGDRNSGKTDNNSPNKTEKRC) is disordered. Mg(2+) contacts are provided by Asp-345 and Asp-354.

Belongs to the RNR ribonuclease family. DIS3L2 subfamily. Mg(2+) is required as a cofactor. Mn(2+) serves as cofactor. Cleaved by caspase ced-3 in vitro.

It is found in the cytoplasm. It localises to the P-body. 3'-5'-exoribonuclease that specifically recognizes RNAs polyuridylated at their 3' end and mediates their degradation. Component of an exosome-independent RNA degradation pathway that mediates degradation of cytoplasmic mRNAs that have been deadenylated and subsequently uridylated at their 3'. In Caenorhabditis elegans, this protein is DIS3-like exonuclease 2.